The sequence spans 197 residues: RNA pyrophosphohydrolase (197 aa).

The 144-residue stretch at 6–149 folds into the Nudix hydrolase domain; the sequence is GYRPNVGIVI…KRDVYRRAMK (144 aa). Positions 38–59 match the Nudix box motif; the sequence is GGINEGETPEQAMFRELFEEVG. Residues 170–197 form a disordered region; the sequence is ETKKAETGKKQPYYHKYAPQNKKGRKRR.

This sequence belongs to the Nudix hydrolase family. RppH subfamily. The cofactor is a divalent metal cation.

In terms of biological role, accelerates the degradation of transcripts by removing pyrophosphate from the 5'-end of triphosphorylated RNA, leading to a more labile monophosphorylated state that can stimulate subsequent ribonuclease cleavage. The sequence is that of RNA pyrophosphohydrolase from Actinobacillus succinogenes (strain ATCC 55618 / DSM 22257 / CCUG 43843 / 130Z).